A 431-amino-acid chain; its full sequence is Glucose-1-phosphate adenylyltransferase (431 aa).

Lys39 serves as a coordination point for beta-D-fructose 1,6-bisphosphate. Arg40, His46, and Arg52 together coordinate AMP. Alpha-D-glucose 1-phosphate is bound at residue Tyr114. Arg130 contacts AMP. Residues Gly179, Glu194–Lys195, and Ser212 contribute to the alpha-D-glucose 1-phosphate site. Residues Glu370 and Arg386 each coordinate AMP. Beta-D-fructose 1,6-bisphosphate contacts are provided by residues Arg419–Arg423 and Gln429–Arg431.

Belongs to the bacterial/plant glucose-1-phosphate adenylyltransferase family. In terms of assembly, homotetramer.

The enzyme catalyses alpha-D-glucose 1-phosphate + ATP + H(+) = ADP-alpha-D-glucose + diphosphate. It functions in the pathway glycan biosynthesis; glycogen biosynthesis. Allosterically activated by fructose-1,6-bisphosphate (F16BP) and inhibited by AMP. Its function is as follows. Involved in the biosynthesis of ADP-glucose, a building block required for the elongation reactions to produce glycogen. Catalyzes the reaction between ATP and alpha-D-glucose 1-phosphate (G1P) to produce pyrophosphate and ADP-Glc. The polypeptide is Glucose-1-phosphate adenylyltransferase (Escherichia coli O45:K1 (strain S88 / ExPEC)).